Here is a 398-residue protein sequence, read N- to C-terminus: MSLVVMATGGTGGHIYPAVATAKELRGRGYEVALMGQKGGMEEGIAEREGLTFYGVDAGKLARSGQGRPDPRQLLKAGQGLAQARRTLAGLNPAAVVGYGGFASLPGVLAAQSLGIPTILHEQNARLGLTQRLAVRRARAVGTAYDKVIGLDPRKATLVGMPVREERMPRAEALAALGLRDGPITIMVMGGSQGSLYLNQQVPGILWRLFGKVGKLRGKGDSVPPIDLDLRGPHLIENARSREVQVLHATGPRWLAEVQPKVENLPWYHVTGYVDAVAAWSVADLGITRAGTGTLAEAAFHGVPLVMVPLPESAENHQYHNAVAVEQAGAGRVVEQKVLPETLEKVVLECAAPGKRAAMRDAAQKRARPGAAARFADLIEVQLRRAPSPTAHAPTAHD.

Residues 11–13, N124, R164, S192, and Q318 contribute to the UDP-N-acetyl-alpha-D-glucosamine site; that span reads TGG.

Belongs to the glycosyltransferase 28 family. MurG subfamily.

The protein localises to the cell membrane. The enzyme catalyses di-trans,octa-cis-undecaprenyl diphospho-N-acetyl-alpha-D-muramoyl-L-alanyl-D-glutamyl-meso-2,6-diaminopimeloyl-D-alanyl-D-alanine + UDP-N-acetyl-alpha-D-glucosamine = di-trans,octa-cis-undecaprenyl diphospho-[N-acetyl-alpha-D-glucosaminyl-(1-&gt;4)]-N-acetyl-alpha-D-muramoyl-L-alanyl-D-glutamyl-meso-2,6-diaminopimeloyl-D-alanyl-D-alanine + UDP + H(+). Its pathway is cell wall biogenesis; peptidoglycan biosynthesis. Its function is as follows. Cell wall formation. Catalyzes the transfer of a GlcNAc subunit on undecaprenyl-pyrophosphoryl-MurNAc-pentapeptide (lipid intermediate I) to form undecaprenyl-pyrophosphoryl-MurNAc-(pentapeptide)GlcNAc (lipid intermediate II). The protein is UDP-N-acetylglucosamine--N-acetylmuramyl-(pentapeptide) pyrophosphoryl-undecaprenol N-acetylglucosamine transferase of Deinococcus radiodurans (strain ATCC 13939 / DSM 20539 / JCM 16871 / CCUG 27074 / LMG 4051 / NBRC 15346 / NCIMB 9279 / VKM B-1422 / R1).